We begin with the raw amino-acid sequence, 458 residues long: ATP synthase subunit beta (458 aa).

148–155 is an ATP binding site; that stretch reads GGAGVGKT.

This sequence belongs to the ATPase alpha/beta chains family. In terms of assembly, F-type ATPases have 2 components, CF(1) - the catalytic core - and CF(0) - the membrane proton channel. CF(1) has five subunits: alpha(3), beta(3), gamma(1), delta(1), epsilon(1). CF(0) has three main subunits: a(1), b(2) and c(9-12). The alpha and beta chains form an alternating ring which encloses part of the gamma chain. CF(1) is attached to CF(0) by a central stalk formed by the gamma and epsilon chains, while a peripheral stalk is formed by the delta and b chains.

It is found in the cell inner membrane. It carries out the reaction ATP + H2O + 4 H(+)(in) = ADP + phosphate + 5 H(+)(out). Produces ATP from ADP in the presence of a proton gradient across the membrane. The catalytic sites are hosted primarily by the beta subunits. The protein is ATP synthase subunit beta of Pseudomonas fluorescens (strain SBW25).